We begin with the raw amino-acid sequence, 461 residues long: Asparagine--tRNA ligase (461 aa).

This sequence belongs to the class-II aminoacyl-tRNA synthetase family. As to quaternary structure, homodimer.

The protein localises to the cytoplasm. It carries out the reaction tRNA(Asn) + L-asparagine + ATP = L-asparaginyl-tRNA(Asn) + AMP + diphosphate + H(+). The polypeptide is Asparagine--tRNA ligase (Nitratidesulfovibrio vulgaris (strain ATCC 29579 / DSM 644 / CCUG 34227 / NCIMB 8303 / VKM B-1760 / Hildenborough) (Desulfovibrio vulgaris)).